The sequence spans 297 residues: Tumor necrosis factor receptor superfamily member 27 (297 aa).

Topologically, residues 1-138 (MDCQENEYWD…TPTVPPQEAT (138 aa)) are extracellular. 3 TNFR-Cys repeats span residues 2-41 (DCQE…DAYC), 43-83 (ACPP…NAVC), and 85-118 (DCLP…EVQC). 8 disulfide bridges follow: C3-C15, C18-C31, C21-C41, C44-C58, C61-C75, C64-C83, C86-C104, and C107-C118. An N-linked (GlcNAc...) asparagine glycan is attached at N74. A helical; Signal-anchor for type III membrane protein transmembrane segment spans residues 139–159 (LVALVSSLLVVFTLAFLGLFF). At 160 to 297 (LYCKQFFNRH…LNVPFEVPSP (138 aa)) the chain is on the cytoplasmic side. The segment covering 272-281 (ETLGGNTVES) has biased composition (polar residues). The segment at 272 to 297 (ETLGGNTVESTGDRLELNVPFEVPSP) is disordered.

As to quaternary structure, associates with TRAF1, TRAF3 and TRAF6.

It is found in the membrane. Functionally, receptor for EDA isoform A2, but not for EDA isoform A1. Mediates the activation of the NF-kappa-B and JNK pathways. Activation seems to be mediated by binding to TRAF3 and TRAF6. The polypeptide is Tumor necrosis factor receptor superfamily member 27 (EDA2R) (Homo sapiens (Human)).